Consider the following 207-residue polypeptide: Alpha-1-acid glycoprotein 8 (207 aa).

The N-terminal stretch at 1–18 (MALHTVLIMLSLLPMLEA) is a signal peptide. Residues Asn-25, Asn-34, Asn-76, Asn-94, and Asn-104 are each glycosylated (N-linked (GlcNAc...) asparagine). Cys-91 and Cys-184 are oxidised to a cystine.

Belongs to the calycin superfamily. Lipocalin family. Expressed by the liver and secreted in plasma.

The protein localises to the secreted. Its function is as follows. Functions as a transport protein in the blood stream. Binds various ligands in the interior of its beta-barrel domain. Appears to function in modulating the activity of the immune system during the acute-phase reaction. This chain is Alpha-1-acid glycoprotein 8 (Orm8), found in Mus caroli (Ryukyu mouse).